The following is a 353-amino-acid chain: GTPase Obg (353 aa).

Residues 1-159 enclose the Obg domain; it reads MKFLDEAKVY…RWIWLRLKLI (159 aa). The 168-residue stretch at 160–327 folds into the OBG-type G domain; sequence ADAGLVGLPN…ALRALVAVIG (168 aa). GTP is bound by residues 166–173, 191–195, 212–215, 279–282, and 308–310; these read GLPNAGKS, FTTLH, DIPG, NKID, and SGV. Mg(2+) is bound by residues Ser173 and Thr193.

It belongs to the TRAFAC class OBG-HflX-like GTPase superfamily. OBG GTPase family. Monomer. It depends on Mg(2+) as a cofactor.

Its subcellular location is the cytoplasm. In terms of biological role, an essential GTPase which binds GTP, GDP and possibly (p)ppGpp with moderate affinity, with high nucleotide exchange rates and a fairly low GTP hydrolysis rate. Plays a role in control of the cell cycle, stress response, ribosome biogenesis and in those bacteria that undergo differentiation, in morphogenesis control. This is GTPase Obg from Rhodopseudomonas palustris (strain ATCC BAA-98 / CGA009).